We begin with the raw amino-acid sequence, 947 residues long: Bifunctional glutamine synthetase adenylyltransferase/adenylyl-removing enzyme (947 aa).

Residues 1-440 (MTPLSSPLSQ…VFNELIGDDE (440 aa)) form an adenylyl removase region. Positions 450-947 (SEPWREVWQD…ASWRKWLVAV (498 aa)) are adenylyl transferase.

It belongs to the GlnE family. It depends on Mg(2+) as a cofactor.

The catalysed reaction is [glutamine synthetase]-O(4)-(5'-adenylyl)-L-tyrosine + phosphate = [glutamine synthetase]-L-tyrosine + ADP. The enzyme catalyses [glutamine synthetase]-L-tyrosine + ATP = [glutamine synthetase]-O(4)-(5'-adenylyl)-L-tyrosine + diphosphate. Involved in the regulation of glutamine synthetase GlnA, a key enzyme in the process to assimilate ammonia. When cellular nitrogen levels are high, the C-terminal adenylyl transferase (AT) inactivates GlnA by covalent transfer of an adenylyl group from ATP to specific tyrosine residue of GlnA, thus reducing its activity. Conversely, when nitrogen levels are low, the N-terminal adenylyl removase (AR) activates GlnA by removing the adenylyl group by phosphorolysis, increasing its activity. The regulatory region of GlnE binds the signal transduction protein PII (GlnB) which indicates the nitrogen status of the cell. This is Bifunctional glutamine synthetase adenylyltransferase/adenylyl-removing enzyme from Salmonella paratyphi B (strain ATCC BAA-1250 / SPB7).